Reading from the N-terminus, the 165-residue chain is Phosphopantetheine adenylyltransferase (165 aa).

Thr-9 contacts substrate. ATP is bound by residues 9-10 and His-17; that span reads TF. Lys-41, Leu-73, and Arg-87 together coordinate substrate. ATP-binding positions include 88-90, Glu-98, and 123-129; these read GLR and YQFISGT.

This sequence belongs to the bacterial CoaD family. As to quaternary structure, homohexamer. Mg(2+) is required as a cofactor.

Its subcellular location is the cytoplasm. The catalysed reaction is (R)-4'-phosphopantetheine + ATP + H(+) = 3'-dephospho-CoA + diphosphate. It participates in cofactor biosynthesis; coenzyme A biosynthesis; CoA from (R)-pantothenate: step 4/5. In terms of biological role, reversibly transfers an adenylyl group from ATP to 4'-phosphopantetheine, yielding dephospho-CoA (dPCoA) and pyrophosphate. The protein is Phosphopantetheine adenylyltransferase of Burkholderia lata (strain ATCC 17760 / DSM 23089 / LMG 22485 / NCIMB 9086 / R18194 / 383).